Here is a 439-residue protein sequence, read N- to C-terminus: ATP-dependent RNA helicase RhlB (439 aa).

A Q motif motif is present at residues 9-37; sequence QKFADLPLHPEVKQALAENGFEFCTPIQA. The 180-residue stretch at 40–219 folds into the Helicase ATP-binding domain; the sequence is LPVLLQSKDI…YDHMNDPVKV (180 aa). Residue 53–60 participates in ATP binding; sequence AQTGTGKT. Positions 165-168 match the DEAD box motif; that stretch reads DEAD. One can recognise a Helicase C-terminal domain in the interval 243-390; that stretch reads KMRLLLTLIE…VSNYDRDALL (148 aa). The segment at 395-439 is disordered; that stretch reads SPVKIHRKHPAGARNLRERSGAGRTPGAHRSGGRPPRHDRTRRQP. Residues 425-439 are compositionally biased toward basic residues; it reads SGGRPPRHDRTRRQP.

It belongs to the DEAD box helicase family. RhlB subfamily. As to quaternary structure, component of the RNA degradosome, which is a multiprotein complex involved in RNA processing and mRNA degradation.

It is found in the cytoplasm. It catalyses the reaction ATP + H2O = ADP + phosphate + H(+). Functionally, DEAD-box RNA helicase involved in RNA degradation. Has RNA-dependent ATPase activity and unwinds double-stranded RNA. The polypeptide is ATP-dependent RNA helicase RhlB (Shewanella oneidensis (strain ATCC 700550 / JCM 31522 / CIP 106686 / LMG 19005 / NCIMB 14063 / MR-1)).